The following is a 129-amino-acid chain: uncharacterized protein (129 aa).

It belongs to the asfivirus C129R family.

The protein localises to the virion. Functionally, plays a role in the inhibition of type I interferon signaling pathway. Mechanistically, specifically interacts with 2',3'-cGAMP and cleaves it via its phosphodiesterase activity. In turn, prevents 2',3'-cGAMP interaction with host ER-resident STING1 leading to inhibition of downstream signaling pathway and type I interferon production. This is an uncharacterized protein from African swine fever virus (strain Badajoz 1971 Vero-adapted) (Ba71V).